Here is a 722-residue protein sequence, read N- to C-terminus: Polyribonucleotide nucleotidyltransferase (722 aa).

The Mg(2+) site is built by D487 and D493. A KH domain is found at 554-613; it reads PRIETFKIPTDKIREVIGTGGKVIREIVEKTGAKVNIEDDGTVKVASSDGESIKAAIKWI. In terms of domain architecture, S1 motif spans 623–691; sequence GEIYEGTVVK…DRGKTRLSMK (69 aa). Positions 697–722 are disordered; the sequence is TGEDLEAKQKAEAKAEGEAPAQAAGE. Over residues 701-713 the composition is skewed to basic and acidic residues; sequence LEAKQKAEAKAEG.

This sequence belongs to the polyribonucleotide nucleotidyltransferase family. The cofactor is Mg(2+).

The protein resides in the cytoplasm. The enzyme catalyses RNA(n+1) + phosphate = RNA(n) + a ribonucleoside 5'-diphosphate. Its function is as follows. Involved in mRNA degradation. Catalyzes the phosphorolysis of single-stranded polyribonucleotides processively in the 3'- to 5'-direction. In Rhodopseudomonas palustris (strain TIE-1), this protein is Polyribonucleotide nucleotidyltransferase.